Reading from the N-terminus, the 414-residue chain is 2,3-bisphosphoglycerate-independent phosphoglycerate mutase (414 aa).

This sequence belongs to the BPG-independent phosphoglycerate mutase family. A-PGAM subfamily.

The catalysed reaction is (2R)-2-phosphoglycerate = (2R)-3-phosphoglycerate. Its pathway is carbohydrate degradation; glycolysis; pyruvate from D-glyceraldehyde 3-phosphate: step 3/5. Catalyzes the interconversion of 2-phosphoglycerate and 3-phosphoglycerate. The sequence is that of 2,3-bisphosphoglycerate-independent phosphoglycerate mutase from Saccharolobus solfataricus (strain ATCC 35092 / DSM 1617 / JCM 11322 / P2) (Sulfolobus solfataricus).